The chain runs to 150 residues: Peptidoglycan-associated lipoprotein (150 aa).

An N-terminal signal peptide occupies residues 1-19; it reads MKKLTKVLLVAGSVAVLAA. The N-palmitoyl cysteine moiety is linked to residue Cys-20. Cys-20 is lipidated: S-diacylglycerol cysteine. One can recognise an OmpA-like domain in the interval 37–150; that stretch reads SVQDLQQRYN…SKNRRAVLAY (114 aa).

The protein belongs to the Pal lipoprotein family. As to quaternary structure, the Tol-Pal system is composed of five core proteins: the inner membrane proteins TolA, TolQ and TolR, the periplasmic protein TolB and the outer membrane protein Pal. They form a network linking the inner and outer membranes and the peptidoglycan layer.

The protein localises to the cell outer membrane. Its function is as follows. Part of the Tol-Pal system, which plays a role in outer membrane invagination during cell division and is important for maintaining outer membrane integrity. The polypeptide is Peptidoglycan-associated lipoprotein (Pasteurella multocida (strain Pm70)).